We begin with the raw amino-acid sequence, 477 residues long: RTX-III toxin determinant D (477 aa).

Residues 1–59 (MKLWILGLGEFFQRYRNIWREIWKIRKQLDTPARQKDENEFLPRHLELIETPISKKPRL) are Cytoplasmic-facing. The helical transmembrane segment at 60–77 (IAYLIMLFLFLAIVISII) threads the bilayer. Topologically, residues 78 to 477 (SKVEIVASAT…ESITESLRER (400 aa)) are periplasmic.

It belongs to the membrane fusion protein (MFP) (TC 8.A.1) family.

It is found in the cell inner membrane. Involved in the transport of the toxin RTX-III. In Actinobacillus pleuropneumoniae (Haemophilus pleuropneumoniae), this protein is RTX-III toxin determinant D (apxIIID).